A 1004-amino-acid chain; its full sequence is Phyllocladan-16-alpha-ol synthase (1004 aa).

Positions 321–324 match the DXDD motif motif; it reads DADD. Mg(2+) contacts are provided by Asp-667, Glu-671, Asn-872, Asp-873, Ser-876, and Asp-880. The short motif at 667–671 is the DEXXE motif element; that stretch reads DEFME.

It belongs to the terpene synthase family. The cofactor is Mg(2+).

It catalyses the reaction (2E,6E,10E)-geranylgeranyl diphosphate = (+)-copalyl diphosphate. The enzyme catalyses (+)-copalyl diphosphate + H2O = phyllocladan-16alpha-ol + diphosphate. Its function is as follows. Involved in the synthesis of labdane-related hydrocarbons by catalyzing the conversion of geranylgeranyl diphosphate (GGDP) to phyllocladan-16-alpha-ol in a two step via type B cyclization into a (+)-copalyl diphosphate ((+)-CDP) intermediate. This is Phyllocladan-16-alpha-ol synthase (PaDC1) from Phomopsis amygdali (Fusicoccum amygdali).